We begin with the raw amino-acid sequence, 136 residues long: T-cell receptor beta chain V region LB2 (136 aa).

The first 21 residues, 1-21 (MNKWVFCWVTLCLLTVETTHG), serve as a signal peptide directing secretion. The tract at residues 22-116 (DGGIITQTPK…EMTVFLCASS (95 aa)) is v segment. Residues C45 and C113 are joined by a disulfide bond. The tract at residues 117–120 (IRLA) is d segment. A j segment region spans residues 121-136 (SAETLYFGSGTRLTVL).

In Mus musculus (Mouse), this protein is T-cell receptor beta chain V region LB2.